A 286-amino-acid chain; its full sequence is Bifunctional protein FolD (286 aa).

Residues 165 to 167 and S190 contribute to the NADP(+) site; that span reads GRS.

Belongs to the tetrahydrofolate dehydrogenase/cyclohydrolase family. In terms of assembly, homodimer.

The enzyme catalyses (6R)-5,10-methylene-5,6,7,8-tetrahydrofolate + NADP(+) = (6R)-5,10-methenyltetrahydrofolate + NADPH. The catalysed reaction is (6R)-5,10-methenyltetrahydrofolate + H2O = (6R)-10-formyltetrahydrofolate + H(+). The protein operates within one-carbon metabolism; tetrahydrofolate interconversion. In terms of biological role, catalyzes the oxidation of 5,10-methylenetetrahydrofolate to 5,10-methenyltetrahydrofolate and then the hydrolysis of 5,10-methenyltetrahydrofolate to 10-formyltetrahydrofolate. The chain is Bifunctional protein FolD from Burkholderia cenocepacia (strain ATCC BAA-245 / DSM 16553 / LMG 16656 / NCTC 13227 / J2315 / CF5610) (Burkholderia cepacia (strain J2315)).